Here is a 177-residue protein sequence, read N- to C-terminus: Large ribosomal subunit protein uL6 (177 aa).

Belongs to the universal ribosomal protein uL6 family. As to quaternary structure, part of the 50S ribosomal subunit.

In terms of biological role, this protein binds to the 23S rRNA, and is important in its secondary structure. It is located near the subunit interface in the base of the L7/L12 stalk, and near the tRNA binding site of the peptidyltransferase center. This Neisseria meningitidis serogroup B (strain ATCC BAA-335 / MC58) protein is Large ribosomal subunit protein uL6.